The following is a 429-amino-acid chain: Adenylosuccinate synthetase (429 aa).

GTP is bound by residues 12-18 and 40-42; these read GDEGKGK and GHT. Catalysis depends on Asp13, which acts as the Proton acceptor. 2 residues coordinate Mg(2+): Asp13 and Gly40. IMP-binding positions include 13–16, 38–41, Thr128, Arg142, Gln223, Thr238, and Arg302; these read DEGK and NAGH. His41 (proton donor) is an active-site residue. Residue 298-304 participates in substrate binding; sequence VNTGRPR. Residues Arg304, 330 to 332, and 412 to 414 each bind GTP; these read KLD and GVG.

Belongs to the adenylosuccinate synthetase family. In terms of assembly, homodimer. It depends on Mg(2+) as a cofactor.

The protein resides in the cytoplasm. It carries out the reaction IMP + L-aspartate + GTP = N(6)-(1,2-dicarboxyethyl)-AMP + GDP + phosphate + 2 H(+). Its pathway is purine metabolism; AMP biosynthesis via de novo pathway; AMP from IMP: step 1/2. Its function is as follows. Plays an important role in the de novo pathway of purine nucleotide biosynthesis. Catalyzes the first committed step in the biosynthesis of AMP from IMP. In Micrococcus luteus (strain ATCC 4698 / DSM 20030 / JCM 1464 / CCM 169 / CCUG 5858 / IAM 1056 / NBRC 3333 / NCIMB 9278 / NCTC 2665 / VKM Ac-2230) (Micrococcus lysodeikticus), this protein is Adenylosuccinate synthetase.